Consider the following 125-residue polypeptide: UPF0389 protein CG9231 (125 aa).

The chain crosses the membrane as a helical span at residues 69–88; the sequence is IRLANIMIALTAVGCAIMVY. Residue N112 is glycosylated (N-linked (GlcNAc...) asparagine).

Belongs to the UPF0389 family.

Its subcellular location is the membrane. The protein is UPF0389 protein CG9231 of Drosophila melanogaster (Fruit fly).